The sequence spans 284 residues: Tropomyosin (284 aa).

A disordered region spans residues 1–41 (MDAIKKKMQAMKLEKDNAVDRAETAEQQSRDAALRAEKAEE). A coiled-coil region spans residues 1 to 284 (MDAIKKKMQA…DQTFSELTGY (284 aa)). Residues 12–41 (KLEKDNAVDRAETAEQQSRDAALRAEKAEE) show a composition bias toward basic and acidic residues.

It belongs to the tropomyosin family. As to quaternary structure, homodimer.

Its function is as follows. Tropomyosin, in association with the troponin complex, plays a central role in the calcium dependent regulation of muscle contraction. The chain is Tropomyosin from Haemaphysalis longicornis (Bush tick).